We begin with the raw amino-acid sequence, 502 residues long: RNA polymerase sigma factor sigA (502 aa).

The N-terminal 23 residues, 1–23 (MATAAVIGLNTGKRLLSSSFYHS), are a transit peptide targeting the chloroplast. Over residues 57–71 (YSPSFPSSNRHTQSA) the composition is skewed to polar residues. The segment at 57 to 92 (YSPSFPSSNRHTQSAKALKESVDVASTEKPWLPNGT) is disordered. A Phosphothreonine modification is found at Thr170. Residues 287 to 300 (DLVQGGLIGLLRGI) carry the Polymerase core binding motif. The segment at residues 461 to 480 (WEDISKRIGLSRERVRQVGL) is a DNA-binding region (H-T-H motif).

It belongs to the sigma-70 factor family. Interacts with SIB1 in chloroplast. Binds to CSK. In terms of processing, the phosphorylation of Thr-170 mediated by oxidative conditions of plastoquinone (PQ) changes the promoter specificity, selectively inhibiting the transcription of the psaA gene, which encodes a PS-I protein. Phosphorylation of the holoenzyme occurs in the dark. This phosphorylation in response to plastoquinone redox state modification is mediated by CSK. Highly expressed in leaves, and to a lesser extent in roots. Expressed in old seedlings (8 days), cotyledons, hypocotyls, leaves, sepals and siliques.

The protein resides in the plastid. It localises to the chloroplast. Its function is as follows. Essential protein. Sigma factors are initiation factors that promote the attachment of plastid-encoded RNA polymerase (PEP) to specific initiation sites and are then released. Controls the transcription of the psaA gene and thus modulates photosystem stoichiometry. Thereby maintains a harmonious electron flow and photosynthetic efficiency. This chain is RNA polymerase sigma factor sigA (SIGA), found in Arabidopsis thaliana (Mouse-ear cress).